Here is a 219-residue protein sequence, read N- to C-terminus: Probable GTP-binding protein EngB (219 aa).

In terms of domain architecture, EngB-type G spans 24–207 (VQPEVAFAGR…HALIESWVRP (184 aa)). GTP contacts are provided by residues 32–39 (GRSNAGKS), 59–63 (GRTQH), 81–84 (DLPG), 148–151 (TKCD), and 185–188 (LFSA). Ser-39 and Thr-61 together coordinate Mg(2+).

This sequence belongs to the TRAFAC class TrmE-Era-EngA-EngB-Septin-like GTPase superfamily. EngB GTPase family. Requires Mg(2+) as cofactor.

Necessary for normal cell division and for the maintenance of normal septation. The polypeptide is Probable GTP-binding protein EngB (Burkholderia mallei (strain ATCC 23344)).